We begin with the raw amino-acid sequence, 171 residues long: Peptide deformylase (171 aa).

Positions 91 and 133 each coordinate Fe cation. The active site involves glutamate 134. Histidine 137 provides a ligand contact to Fe cation.

Belongs to the polypeptide deformylase family. It depends on Fe(2+) as a cofactor.

It carries out the reaction N-terminal N-formyl-L-methionyl-[peptide] + H2O = N-terminal L-methionyl-[peptide] + formate. Removes the formyl group from the N-terminal Met of newly synthesized proteins. Requires at least a dipeptide for an efficient rate of reaction. N-terminal L-methionine is a prerequisite for activity but the enzyme has broad specificity at other positions. This chain is Peptide deformylase, found in Hamiltonella defensa subsp. Acyrthosiphon pisum (strain 5AT).